A 216-amino-acid polypeptide reads, in one-letter code: Large ribosomal subunit protein eL15 (216 aa).

It belongs to the eukaryotic ribosomal protein eL15 family.

The polypeptide is Large ribosomal subunit protein eL15 (Metallosphaera sedula (strain ATCC 51363 / DSM 5348 / JCM 9185 / NBRC 15509 / TH2)).